The primary structure comprises 725 residues: Nitrogen regulatory protein areA (725 aa).

Disordered stretches follow at residues 1 to 90, 429 to 464, and 479 to 524; these read MRLS…RTNS, NQGGTLGRAHGSAASVSEVRNQNQDPRRYGKVPRTA, and GSAS…PEPA. A compositionally biased stretch (basic and acidic residues) spans 39-48; the sequence is PAEHSAHPSV. 2 stretches are compositionally biased toward polar residues: residues 442 to 452 and 479 to 500; these read ASVSEVRNQNQ and GSASGLPTNHPSPSTLPESGLS. A GATA-type zinc finger spans residues 525-549; that stretch reads CTNCFTQTTPLWRRNPEGQPLCNAC. Residues 574–714 form a disordered region; sequence RSSANTLTVG…NHSIAGGQGA (141 aa). 2 stretches are compositionally biased toward polar residues: residues 575 to 584 and 597 to 624; these read SSANTLTVGT and IQHAPSTSISSRMNTSESPPSINGSSTL. Composition is skewed to low complexity over residues 631 to 656 and 678 to 704; these read PIAAAPPKSGPPAGVAQARAGVQVAP and KSAAPPSRSKVVPLAPAMAPPAAANPA.

It localises to the nucleus. Major nitrogen regulatory protein. This Penicillium chrysogenum (Penicillium notatum) protein is Nitrogen regulatory protein areA (AREA).